The following is an 80-amino-acid chain: Toxin Acra I-3 (80 aa).

The signal sequence occupies residues 1 to 22 (MMKLVLLSVIVILFSLIGSIHG). An LCN-type CS-alpha/beta domain is found at 25–80 (VPGNYPLDSSGNKYPCTVLGDNQSCIDVCKKHGVKYGYCYGFKCWCEYLKDKNVSL). Disulfide bonds link Cys40/Cys63, Cys49/Cys68, and Cys53/Cys70.

Belongs to the long (3 C-C) scorpion toxin superfamily. Sodium/Potassium channel inhibitor family. Expressed by the venom gland.

The protein resides in the secreted. Functionally, probable neurotoxin that inhibits ion channels. Is toxic to mice. The protein is Toxin Acra I-3 of Androctonus crassicauda (Arabian fat-tailed scorpion).